Here is a 637-residue protein sequence, read N- to C-terminus: DEAD-box ATP-dependent RNA helicase 37 (637 aa).

2 disordered regions span residues 1 to 68 (MRSS…QPSA) and 86 to 141 (GPAS…EEAT). Low complexity-rich tracts occupy residues 10 to 28 (ANAE…PVAN) and 46 to 68 (GQAP…QPSA). The span at 104–116 (GGRGGGGGGGGGW) shows a compositional bias: gly residues. Positions 174–202 (NTFAEIDLGDALNENIRRCKYVKPTPVQR) match the Q motif motif. The Helicase ATP-binding domain maps to 205–389 (IPISIAGRDL…SDFLADYIFL (185 aa)). Residue 218 to 225 (AQTGSGKT) participates in ATP binding. Residues 333-336 (DEAD) carry the DEAD box motif. Positions 416-567 (YLMDLLHAQK…EVPQWLERYS (152 aa)) constitute a Helicase C-terminal domain. The tract at residues 570–610 (SSFGGGGGRNRRSGGARFGGRDFRRDNRGGGGGGYGGGGGG) is disordered. The span at 588 to 597 (GGRDFRRDNR) shows a compositional bias: basic and acidic residues. Residues 598-610 (GGGGGGYGGGGGG) are compositionally biased toward gly residues.

It belongs to the DEAD box helicase family. DDX3/DED1 subfamily.

It catalyses the reaction ATP + H2O = ADP + phosphate + H(+). This Oryza sativa subsp. japonica (Rice) protein is DEAD-box ATP-dependent RNA helicase 37 (PL10A).